A 446-amino-acid polypeptide reads, in one-letter code: Maltoporin (446 aa).

A signal peptide spans 1–25; it reads MMITLRKLPLAVAVAAGVMSAQAMA.

It belongs to the porin LamB (TC 1.B.3) family. As to quaternary structure, homotrimer formed of three 18-stranded antiparallel beta-barrels, containing three independent channels.

The protein localises to the cell outer membrane. The enzyme catalyses beta-maltose(in) = beta-maltose(out). In terms of biological role, involved in the transport of maltose and maltodextrins. The chain is Maltoporin from Escherichia coli O7:K1 (strain IAI39 / ExPEC).